The chain runs to 359 residues: Phosphoserine aminotransferase (359 aa).

Position 41 (Arg41) interacts with L-glutamate. Residues 75–76 (AS), Trp101, Thr151, Asp171, and Gln194 contribute to the pyridoxal 5'-phosphate site. Lys195 bears the N6-(pyridoxal phosphate)lysine mark. 236–237 (NT) is a binding site for pyridoxal 5'-phosphate.

This sequence belongs to the class-V pyridoxal-phosphate-dependent aminotransferase family. SerC subfamily. As to quaternary structure, homodimer. Pyridoxal 5'-phosphate is required as a cofactor.

It is found in the cytoplasm. The enzyme catalyses O-phospho-L-serine + 2-oxoglutarate = 3-phosphooxypyruvate + L-glutamate. It carries out the reaction 4-(phosphooxy)-L-threonine + 2-oxoglutarate = (R)-3-hydroxy-2-oxo-4-phosphooxybutanoate + L-glutamate. Its pathway is amino-acid biosynthesis; L-serine biosynthesis; L-serine from 3-phospho-D-glycerate: step 2/3. The protein operates within cofactor biosynthesis; pyridoxine 5'-phosphate biosynthesis; pyridoxine 5'-phosphate from D-erythrose 4-phosphate: step 3/5. Its function is as follows. Catalyzes the reversible conversion of 3-phosphohydroxypyruvate to phosphoserine and of 3-hydroxy-2-oxo-4-phosphonooxybutanoate to phosphohydroxythreonine. The protein is Phosphoserine aminotransferase of Thiobacillus denitrificans (strain ATCC 25259 / T1).